We begin with the raw amino-acid sequence, 418 residues long: MSKVELNKETGPREVFCGLTSIVWLHRRMPDAFFLVVGSRTCAHLIQSAAGVMIFAEPRFGTAILEEKDLAGLADAHEELDRVVNDLISRRPEIKTLFLVGSCPSEVIKLDLATVSEKLNKRFLGQVRFVNYSGSGIETTFTQGEDGALKALVPLMESTDDEKLLLVGTLANNVEDRFKKIFNHIGITNVESFPPRQSTELPKIGKNTKVLLTQPYLSDTVRDLKHRGCEIIYAPFPLGVEGSSKWFLAGADAFKINELKVHEVIAPLANRARQALEKHTEILRGKKLFLLPESQLEISLARFLHNECGMELIEVGTPYLNKDLMDEELNLLPDDTKIVEGQHVEKQLDRVRATSPDLVVCGMGLANPLEAEGISTKWSIEMVFSPIHGIDQAADLAGLFSRPLKRNQILTSKTLATH.

Positions 17, 42, and 103 each coordinate [4Fe-4S] cluster.

It belongs to the BchN/ChlN family. Protochlorophyllide reductase is composed of three subunits; ChlL, ChlN and ChlB. Forms a heterotetramer of two ChlB and two ChlN subunits. [4Fe-4S] cluster is required as a cofactor.

The catalysed reaction is chlorophyllide a + oxidized 2[4Fe-4S]-[ferredoxin] + 2 ADP + 2 phosphate = protochlorophyllide a + reduced 2[4Fe-4S]-[ferredoxin] + 2 ATP + 2 H2O. It functions in the pathway porphyrin-containing compound metabolism; chlorophyll biosynthesis (light-independent). Functionally, component of the dark-operative protochlorophyllide reductase (DPOR) that uses Mg-ATP and reduced ferredoxin to reduce ring D of protochlorophyllide (Pchlide) to form chlorophyllide a (Chlide). This reaction is light-independent. The NB-protein (ChlN-ChlB) is the catalytic component of the complex. This Prochlorococcus marinus (strain MIT 9312) protein is Light-independent protochlorophyllide reductase subunit N.